A 966-amino-acid chain; its full sequence is uncharacterized protein (966 aa).

The N-terminal stretch at 1–24 is a signal peptide; sequence MQGNLLKVLGVLAIVATLVCFIFA. Helical transmembrane passes span 601-621, 711-731, 743-763, 785-805, 822-842, and 855-875; these read IKAI…LGFA, LGLS…IVII, AFMA…FLLF, VVMM…LDFV, FIGT…INWF, and GVNM…YGYV. The interval 918–966 is disordered; the sequence is TRQGITGRAEARLKQRNKTLDQAEKNRKNTQKEGGEKTNEEPPKPETPK. A compositionally biased stretch (basic and acidic residues) spans 926–966; that stretch reads AEARLKQRNKTLDQAEKNRKNTQKEGGEKTNEEPPKPETPK.

This sequence belongs to the TrbL/VirB6 family.

Its subcellular location is the cell membrane. This is an uncharacterized protein from Rickettsia conorii (strain ATCC VR-613 / Malish 7).